Consider the following 962-residue polypeptide: Alpha-glucan phosphorylase 1 (962 aa).

Residues 1–63 (MDTMRISGVS…RSFLSVKSIS (63 aa)) constitute a chloroplast transit peptide. The interval 525-552 (AKDAQNGVKTEQEEEKTAGEEEEDEVIP) is disordered. Residue lysine 808 is modified to N6-(pyridoxal phosphate)lysine.

This sequence belongs to the glycogen phosphorylase family. Pyridoxal 5'-phosphate is required as a cofactor.

It is found in the plastid. The protein localises to the chloroplast stroma. It carries out the reaction [(1-&gt;4)-alpha-D-glucosyl](n) + phosphate = [(1-&gt;4)-alpha-D-glucosyl](n-1) + alpha-D-glucose 1-phosphate. In terms of biological role, phosphorylase is an important allosteric enzyme in carbohydrate metabolism. Enzymes from different sources differ in their regulatory mechanisms and in their natural substrates. However, all known phosphorylases share catalytic and structural properties. May be not required for the degradation of starch, but the phosphorolysis of starch may play an important role in water stress tolerance. This is Alpha-glucan phosphorylase 1 (PHS1) from Arabidopsis thaliana (Mouse-ear cress).